We begin with the raw amino-acid sequence, 63 residues long: Alpha-toxin CsE5 (63 aa).

The LCN-type CS-alpha/beta domain maps to 2–61; the sequence is KDGYPVDSGNCKYECLKDDYCNDLCLERKADKGYCYWGKVSCYCYGLPDNSPTKTSGKCN. Intrachain disulfides connect C12/C60, C16/C36, C22/C43, and C26/C45.

Belongs to the long (4 C-C) scorpion toxin superfamily. Sodium channel inhibitor family. Alpha subfamily. As to expression, expressed by the venom gland.

The protein localises to the secreted. Its function is as follows. Alpha toxins bind voltage-independently at site-3 of sodium channels (Nav) and inhibit the inactivation of the activated channels, thereby blocking neuronal transmission. In Centruroides sculpturatus (Arizona bark scorpion), this protein is Alpha-toxin CsE5.